Here is a 110-residue protein sequence, read N- to C-terminus: Large ribosomal subunit protein uL22 (110 aa).

It belongs to the universal ribosomal protein uL22 family. In terms of assembly, part of the 50S ribosomal subunit.

In terms of biological role, this protein binds specifically to 23S rRNA; its binding is stimulated by other ribosomal proteins, e.g. L4, L17, and L20. It is important during the early stages of 50S assembly. It makes multiple contacts with different domains of the 23S rRNA in the assembled 50S subunit and ribosome. The globular domain of the protein is located near the polypeptide exit tunnel on the outside of the subunit, while an extended beta-hairpin is found that lines the wall of the exit tunnel in the center of the 70S ribosome. In Aliivibrio fischeri (strain MJ11) (Vibrio fischeri), this protein is Large ribosomal subunit protein uL22.